Here is a 146-residue protein sequence, read N- to C-terminus: Large-conductance mechanosensitive channel (146 aa).

Helical transmembrane passes span 12–32 (AFAM…GGAF) and 88–108 (LQAT…IKLI).

This sequence belongs to the MscL family. Homopentamer.

It is found in the cell inner membrane. Channel that opens in response to stretch forces in the membrane lipid bilayer. May participate in the regulation of osmotic pressure changes within the cell. This is Large-conductance mechanosensitive channel from Bacteroides fragilis (strain ATCC 25285 / DSM 2151 / CCUG 4856 / JCM 11019 / LMG 10263 / NCTC 9343 / Onslow / VPI 2553 / EN-2).